We begin with the raw amino-acid sequence, 671 residues long: UBA domain-containing protein RUP1 (671 aa).

Residues methionine 1–asparagine 41 enclose the UBA domain. A Phosphoserine modification is found at serine 56. Residues glycine 68 to valine 87 form a disordered region. Residues serine 432–glutamate 501 are a coiled coil. The tract at residues aspartate 643 to asparagine 671 is disordered. Residues asparagine 661 to asparagine 671 are compositionally biased toward acidic residues.

Forms a ternary complex with RSP5 and UBP2.

It is found in the cytoplasm. The protein localises to the nucleus. Functionally, modulates the activity of the RSP5 HECT ubiquitin-protein ligase through its mediation of the interaction between RSP5 and the deubiquitinase UBP2. Involved in regulation of cell wall homeostasis. This Saccharomyces cerevisiae (strain ATCC 204508 / S288c) (Baker's yeast) protein is UBA domain-containing protein RUP1 (RUP1).